Reading from the N-terminus, the 134-residue chain is 4-carboxymuconolactone decarboxylase (134 aa).

It belongs to the carboxymuconolactone decarboxylase family.

It carries out the reaction (R)-2-(carboxymethyl)-5-oxo-2,5-dihydro-2-furoate + H(+) = (4,5-dihydro-5-oxofuran-2-yl)-acetate + CO2. It functions in the pathway aromatic compound metabolism; beta-ketoadipate pathway; 5-oxo-4,5-dihydro-2-furylacetate from 3-carboxy-cis,cis-muconate: step 2/2. This Acinetobacter baylyi (strain ATCC 33305 / BD413 / ADP1) protein is 4-carboxymuconolactone decarboxylase (pcaC).